The sequence spans 284 residues: Cystinosin homolog (284 aa).

A run of 7 helical transmembrane segments spans residues 3–23 (ALSI…SLSF), 37–57 (IGLS…YSVF), 86–106 (IAFA…CFIY), 116–136 (LGIG…ILGF), 139–159 (VFTW…ITFI), 181–201 (NVLL…LDVA), and 216–236 (LGLS…HYIL). Residues 4 to 70 (LSIISIIIGW…LYFDKLVKNE (67 aa)) form the PQ-loop 1 domain. The region spanning 154–208 (LFITFIKYIPQAYLNFKNKSTSGWSVHNVLLDFSGGVLSLLQMFLDVADSGNWNI) is the PQ-loop 2 domain. Positions 247 to 269 (NLNDNNIPNNNNNNNNNINNNTP) are disordered.

It belongs to the cystinosin family.

The protein localises to the lysosome membrane. It carries out the reaction L-cystine(out) + H(+)(out) = L-cystine(in) + H(+)(in). Cystine/H(+) symporter that mediates export of cystine, the oxidized dimer of cysteine, from lysosomes. The chain is Cystinosin homolog (ctns) from Dictyostelium discoideum (Social amoeba).